We begin with the raw amino-acid sequence, 352 residues long: Dolichol-phosphate mannosyltransferase (352 aa).

The Cytoplasmic portion of the chain corresponds to 1–229 (MKVSVIIPTY…HIYRLMKWEG (229 aa)). Residues P8, Y10, E12, V37, D39, D89, A90, D91, Q93, R117, V156, K178, R202, and K208 each contribute to the GDP-alpha-D-mannose site. Mg(2+) is bound by residues D91 and Q93. The Mn(2+) site is built by D91 and Q93. The chain crosses the membrane as a helical span at residues 230-256 (EIDRIVKFSIVGLSGILVNEGFLWLFV). The Extracellular segment spans residues 257-261 (NLGIP). The helical transmembrane segment at 262–286 (KEIAVIPAVELSILNNFFWNDIWTF) threads the bilayer. Residues 287–293 (KDIRRGS) are Cytoplasmic-facing. Residues 294–320 (IFSRLLKFHIAALSGAVVNFIVYWILL) form a helical membrane-spanning segment. Topologically, residues 321 to 325 (FLGIH) are extracellular. The helical transmembrane segment at 326–350 (YLIANLVGIVLSFGVRYVINRHVTW) threads the bilayer. Residues 351-352 (AT) lie on the Cytoplasmic side of the membrane.

The protein belongs to the glycosyltransferase 2 family. Requires Mg(2+) as cofactor. The cofactor is Mn(2+). Ca(2+) serves as cofactor.

The protein localises to the cell membrane. The catalysed reaction is a di-trans,poly-cis-dolichyl phosphate + GDP-alpha-D-mannose = a di-trans,poly-cis-dolichyl beta-D-mannosyl phosphate + GDP. The protein operates within protein modification; protein glycosylation. Functionally, transfers mannose from GDP-mannose to dolichol monophosphate to form dolichol phosphate mannose (Dol-P-Man) which is the mannosyl donor in pathways leading to N-glycosylation, glycosyl phosphatidylinositol membrane anchoring, and O-mannosylation of proteins. The chain is Dolichol-phosphate mannosyltransferase from Pyrococcus furiosus (strain ATCC 43587 / DSM 3638 / JCM 8422 / Vc1).